The following is a 350-amino-acid chain: UDP-3-O-acylglucosamine N-acyltransferase (350 aa).

Residue H248 is the Proton acceptor of the active site.

This sequence belongs to the transferase hexapeptide repeat family. LpxD subfamily. Homotrimer.

The enzyme catalyses a UDP-3-O-[(3R)-3-hydroxyacyl]-alpha-D-glucosamine + a (3R)-hydroxyacyl-[ACP] = a UDP-2-N,3-O-bis[(3R)-3-hydroxyacyl]-alpha-D-glucosamine + holo-[ACP] + H(+). It functions in the pathway bacterial outer membrane biogenesis; LPS lipid A biosynthesis. In terms of biological role, catalyzes the N-acylation of UDP-3-O-acylglucosamine using 3-hydroxyacyl-ACP as the acyl donor. Is involved in the biosynthesis of lipid A, a phosphorylated glycolipid that anchors the lipopolysaccharide to the outer membrane of the cell. The protein is UDP-3-O-acylglucosamine N-acyltransferase of Nostoc punctiforme (strain ATCC 29133 / PCC 73102).